Consider the following 81-residue polypeptide: Small serum protein 4 (81 aa).

The first 19 residues, 1–19, serve as a signal peptide directing secretion; that stretch reads MKVFFILIIFSFTLATCQG. 3 disulfide bridges follow: cysteine 21/cysteine 74, cysteine 41/cysteine 66, and cysteine 64/cysteine 73.

This sequence belongs to the beta-microseminoprotein family.

It is found in the secreted. In terms of biological role, shows an slight inhibitory effect toward the metalloproteinase brevilysin H6, but does not inhibit the metalloproteinases thermolysin, HR1A and HR1B. In Protobothrops flavoviridis (Habu), this protein is Small serum protein 4.